The chain runs to 586 residues: Serine/threonine-protein phosphatase 2A 56 kDa regulatory subunit delta isoform (586 aa).

Residues 1-80 (MSPSPSSSGK…QSSSRFNLSK (80 aa)) form a disordered region. A run of 6 repeats spans residues 21–22 (QP), 23–24 (QP), 25–26 (QP), 27–28 (QP), 29–30 (QP), and 31–32 (QP). The tract at residues 21 to 36 (QPQPQPQPQPQPQSQP) is 8 X 2 AA approximate tandem repeats of Q-P. Residues 23 to 35 (QPQPQPQPQPQSQ) are compositionally biased toward pro residues. The stretch at 33-34 (QS) is one 7; approximate repeat. Repeat 8 spans residues 35 to 36 (QP). The segment covering 36–45 (PPSSNKRPSN) has biased composition (low complexity). Thr47 is modified (phosphothreonine). Phosphoserine occurs at positions 72, 73, and 74. The short motif at 507 to 514 (RAPPPLPP) is the SH3-binding; class I element. The Nuclear localization signal motif lies at 532 to 549 (KRTVETEAVQMLKDIKKE). Residues Ser557 and Ser582 each carry the phosphoserine modification.

The protein belongs to the phosphatase 2A regulatory subunit B56 family. In terms of assembly, PP2A consists of a common heterodimeric core enzyme, composed of a 36 kDa catalytic subunit (subunit C) and a 65 kDa constant regulatory subunit (PR65 or subunit A), that associates with a variety of regulatory subunits. Proteins that associate with the core dimer include three families of regulatory subunits B (the R2/B/PR55/B55, R3/B''/PR72/PR130/PR59 and R5/B'/B56 families), the 48 kDa variable regulatory subunit, viral proteins, and cell signaling molecules. Interacts with the PP2A A subunit PPP2R1A. Interacts with SGO1. Interacts with ADCY8. In terms of tissue distribution, highly expressed in brain.

The protein resides in the nucleus. The B regulatory subunit might modulate substrate selectivity and catalytic activity, and might also direct the localization of the catalytic enzyme to a particular subcellular compartment. This Oryctolagus cuniculus (Rabbit) protein is Serine/threonine-protein phosphatase 2A 56 kDa regulatory subunit delta isoform (PPP2R5D).